A 161-amino-acid chain; its full sequence is Ribosome maturation factor RimP (161 aa).

This sequence belongs to the RimP family.

It localises to the cytoplasm. Required for maturation of 30S ribosomal subunits. The sequence is that of Ribosome maturation factor RimP from Rickettsia conorii (strain ATCC VR-613 / Malish 7).